The sequence spans 253 residues: Imidazole glycerol phosphate synthase subunit HisF (253 aa).

Active-site residues include Asp11 and Asp130.

Belongs to the HisA/HisF family. In terms of assembly, heterodimer of HisH and HisF.

The protein localises to the cytoplasm. The enzyme catalyses 5-[(5-phospho-1-deoxy-D-ribulos-1-ylimino)methylamino]-1-(5-phospho-beta-D-ribosyl)imidazole-4-carboxamide + L-glutamine = D-erythro-1-(imidazol-4-yl)glycerol 3-phosphate + 5-amino-1-(5-phospho-beta-D-ribosyl)imidazole-4-carboxamide + L-glutamate + H(+). It functions in the pathway amino-acid biosynthesis; L-histidine biosynthesis; L-histidine from 5-phospho-alpha-D-ribose 1-diphosphate: step 5/9. In terms of biological role, IGPS catalyzes the conversion of PRFAR and glutamine to IGP, AICAR and glutamate. The HisF subunit catalyzes the cyclization activity that produces IGP and AICAR from PRFAR using the ammonia provided by the HisH subunit. The protein is Imidazole glycerol phosphate synthase subunit HisF of Lysinibacillus sphaericus (strain C3-41).